Here is a 256-residue protein sequence, read N- to C-terminus: Pimeloyl-[acyl-carrier protein] methyl ester esterase (256 aa).

The 228-residue stretch at 15–242 (HLVLLHGWGL…AAHAPFISHP (228 aa)) folds into the AB hydrolase-1 domain. Substrate is bound by residues tryptophan 22, 82 to 83 (SL), and 143 to 147 (FLALQ). The active-site Nucleophile is serine 82. Active-site residues include aspartate 207 and histidine 235. Histidine 235 contacts substrate.

Belongs to the AB hydrolase superfamily. Carboxylesterase BioH family. Monomer.

Its subcellular location is the cytoplasm. The catalysed reaction is 6-carboxyhexanoyl-[ACP] methyl ester + H2O = 6-carboxyhexanoyl-[ACP] + methanol + H(+). Its pathway is cofactor biosynthesis; biotin biosynthesis. Functionally, the physiological role of BioH is to remove the methyl group introduced by BioC when the pimeloyl moiety is complete. It allows to synthesize pimeloyl-ACP via the fatty acid synthetic pathway through the hydrolysis of the ester bonds of pimeloyl-ACP esters. The polypeptide is Pimeloyl-[acyl-carrier protein] methyl ester esterase (Escherichia coli O127:H6 (strain E2348/69 / EPEC)).